We begin with the raw amino-acid sequence, 80 residues long: Large ribosomal subunit protein uL24 (80 aa).

It belongs to the universal ribosomal protein uL24 family. As to quaternary structure, part of the 50S ribosomal subunit.

In terms of biological role, one of two assembly initiator proteins, it binds directly to the 5'-end of the 23S rRNA, where it nucleates assembly of the 50S subunit. Its function is as follows. One of the proteins that surrounds the polypeptide exit tunnel on the outside of the subunit. This is Large ribosomal subunit protein uL24 from Prosthecochloris aestuarii (strain DSM 271 / SK 413).